Consider the following 123-residue polypeptide: Ribonuclease P protein component 2 (123 aa).

This sequence belongs to the eukaryotic/archaeal RNase P protein component 2 family. Consists of a catalytic RNA component and at least 4 protein subunits.

It catalyses the reaction Endonucleolytic cleavage of RNA, removing 5'-extranucleotides from tRNA precursor.. Part of ribonuclease P, a protein complex that generates mature tRNA molecules by cleaving their 5'-ends. The chain is Ribonuclease P protein component 2 from Aeropyrum pernix (strain ATCC 700893 / DSM 11879 / JCM 9820 / NBRC 100138 / K1).